Here is a 150-residue protein sequence, read N- to C-terminus: SPbeta prophage-derived uncharacterized protein YoqH (150 aa).

Positions 1–23 are cleaved as a signal peptide; sequence MKRFILVLSFLSIIVAYPIQTNA.

The chain is SPbeta prophage-derived uncharacterized protein YoqH (yoqH) from Bacillus subtilis (strain 168).